The chain runs to 62 residues: Conotoxin Pn-B02 (62 aa).

Positions 1–19 are cleaved as a signal peptide; sequence MRCLPVFIILLLLIASAPS. The propeptide occupies 20-49; it reads FDALPKTEDNVPLSSFHDNLKRTRRIHLNI. Alanine 61 bears the Alanine amide mark.

This sequence belongs to the conotoxin T superfamily. Post-translationally, contains 2 disulfide bonds that can be either 'C1-C3, C2-C4' or 'C1-C4, C2-C3', since these disulfide connectivities have been observed for conotoxins with cysteine framework V (for examples, see AC P0DQQ7 and AC P81755). Expressed by the venom duct.

It is found in the secreted. The chain is Conotoxin Pn-B02 from Conus pennaceus (Feathered cone).